Consider the following 147-residue polypeptide: 6,7-dimethyl-8-ribityllumazine synthase (147 aa).

5-amino-6-(D-ribitylamino)uracil contacts are provided by residues F16, 48–50 (TFD), and 73–75 (AVI). 78–79 (DT) is a binding site for (2S)-2-hydroxy-3-oxobutyl phosphate. The active-site Proton donor is H81. A 5-amino-6-(D-ribitylamino)uracil-binding site is contributed by L106. R121 contributes to the (2S)-2-hydroxy-3-oxobutyl phosphate binding site.

Belongs to the DMRL synthase family.

The catalysed reaction is (2S)-2-hydroxy-3-oxobutyl phosphate + 5-amino-6-(D-ribitylamino)uracil = 6,7-dimethyl-8-(1-D-ribityl)lumazine + phosphate + 2 H2O + H(+). The protein operates within cofactor biosynthesis; riboflavin biosynthesis; riboflavin from 2-hydroxy-3-oxobutyl phosphate and 5-amino-6-(D-ribitylamino)uracil: step 1/2. Functionally, catalyzes the formation of 6,7-dimethyl-8-ribityllumazine by condensation of 5-amino-6-(D-ribitylamino)uracil with 3,4-dihydroxy-2-butanone 4-phosphate. This is the penultimate step in the biosynthesis of riboflavin. The polypeptide is 6,7-dimethyl-8-ribityllumazine synthase (Aeropyrum pernix (strain ATCC 700893 / DSM 11879 / JCM 9820 / NBRC 100138 / K1)).